We begin with the raw amino-acid sequence, 441 residues long: Fibroleukin (441 aa).

Residues Met-1–Ala-15 form the signal peptide. Asn-25 is a glycosylation site (N-linked (GlcNAc...) asparagine). Residues Ser-73 to Asn-167 are a coiled coil. The segment at Gln-102–Asn-128 is disordered. N-linked (GlcNAc...) asparagine glycans are attached at residues Asn-179, Asn-237, Asn-265, and Asn-338. The Fibrinogen C-terminal domain maps to Val-206 to His-438.

In terms of assembly, homotetramer; disulfide-linked.

The protein localises to the secreted. Functionally, may play a role in physiologic lymphocyte functions at mucosal sites. This chain is Fibroleukin (FGL2), found in Bos taurus (Bovine).